Consider the following 1701-residue polypeptide: Coiled-coil domain-containing protein 180 (1701 aa).

Residues 1 to 35 are disordered; sequence MRGGENRPPARVQSSSEELELRHQSLDAFPGRRLP. A coiled-coil region spans residues 171 to 198; that stretch reads QRQAEHKRKSYESALASFQEEIAQVGKE. Disordered regions lie at residues 657–808, 1272–1291, and 1319–1354; these read EKPS…DKEE, HHCDKDPSQTGRGAWACGSR, and GFKRHRCQPENSGKKAVPSASATSAGSFTPHPKPNK. The span at 661–671 shows a compositional bias: basic residues; the sequence is QKRVKKLRKKQ. Positions 672 to 682 are enriched in basic and acidic residues; that stretch reads GSKEDMTRSEE. Residues 683–692 are compositionally biased toward polar residues; that stretch reads SISSGTSTAR. Acidic residues predominate over residues 696–705; that stretch reads EVEEENDQEM. Residues 755-766 show a composition bias toward basic and acidic residues; it reads ENVKGQGEKKEE. Residues 757-804 adopt a coiled-coil conformation; that stretch reads VKGQGEKKEESEEEDEKEEEEEEEKLEEEKEEKEAQEEQESLSVGEEE. Residues 767–808 show a composition bias toward acidic residues; that stretch reads SEEEDEKEEEEEEEKLEEEKEEKEAQEEQESLSVGEEEDKEE.

The chain is Coiled-coil domain-containing protein 180 (CCDC180) from Homo sapiens (Human).